The following is a 315-amino-acid chain: Homoserine kinase (315 aa).

An ATP-binding site is contributed by 97-107; the sequence is PPARGLGSSAT.

It belongs to the GHMP kinase family. Homoserine kinase subfamily.

It is found in the cytoplasm. The enzyme catalyses L-homoserine + ATP = O-phospho-L-homoserine + ADP + H(+). Its pathway is amino-acid biosynthesis; L-threonine biosynthesis; L-threonine from L-aspartate: step 4/5. In terms of biological role, catalyzes the ATP-dependent phosphorylation of L-homoserine to L-homoserine phosphate. The chain is Homoserine kinase from Prochlorococcus marinus (strain MIT 9515).